The primary structure comprises 92 residues: Large ribosomal subunit protein bL27 (92 aa).

A propeptide spanning residues 1 to 9 (MLKLNLQFF) is cleaved from the precursor. Residues 14-34 (GVGSTKNGRDSQSKRLGAKRA) are disordered.

This sequence belongs to the bacterial ribosomal protein bL27 family. In terms of processing, the N-terminus is cleaved by ribosomal processing cysteine protease Prp.

The protein is Large ribosomal subunit protein bL27 of Exiguobacterium sibiricum (strain DSM 17290 / CCUG 55495 / CIP 109462 / JCM 13490 / 255-15).